A 388-amino-acid polypeptide reads, in one-letter code: Succinate--CoA ligase [ADP-forming] subunit beta (388 aa).

Residues 9–244 (KQLFAEYGLP…PSQDDAREAH (236 aa)) enclose the ATP-grasp domain. Residues Lys-46, 53–55 (GRG), Glu-99, Thr-102, and Glu-107 each bind ATP. Mg(2+)-binding residues include Asn-199 and Asp-213. Residues Asn-264 and 321 to 323 (GIV) each bind substrate.

This sequence belongs to the succinate/malate CoA ligase beta subunit family. As to quaternary structure, heterotetramer of two alpha and two beta subunits. Mg(2+) serves as cofactor.

It carries out the reaction succinate + ATP + CoA = succinyl-CoA + ADP + phosphate. It catalyses the reaction GTP + succinate + CoA = succinyl-CoA + GDP + phosphate. It participates in carbohydrate metabolism; tricarboxylic acid cycle; succinate from succinyl-CoA (ligase route): step 1/1. In terms of biological role, succinyl-CoA synthetase functions in the citric acid cycle (TCA), coupling the hydrolysis of succinyl-CoA to the synthesis of either ATP or GTP and thus represents the only step of substrate-level phosphorylation in the TCA. The beta subunit provides nucleotide specificity of the enzyme and binds the substrate succinate, while the binding sites for coenzyme A and phosphate are found in the alpha subunit. The polypeptide is Succinate--CoA ligase [ADP-forming] subunit beta (Pseudomonas paraeruginosa (strain DSM 24068 / PA7) (Pseudomonas aeruginosa (strain PA7))).